The chain runs to 610 residues: Probable methyltransferase PMT22 (610 aa).

The Cytoplasmic segment spans residues 1-10 (MIKNIFQSRK). A helical; Signal-anchor for type II membrane protein transmembrane segment spans residues 11–31 (LSGLCVLSILLVSVTILLLTN). Over 32 to 610 (DTIDLFPYLS…LVGLKSSWRP (579 aa)) the chain is Lumenal. The segment covering 56–69 (STPISSPTNDSSPP) has biased composition (low complexity). Residues 56 to 81 (STPISSPTNDSSPPLESPVNQTRVDD) form a disordered region. N-linked (GlcNAc...) asparagine glycosylation is found at Asn64, Asn75, Asn100, Asn400, Asn469, and Asn546.

The protein belongs to the methyltransferase superfamily.

It is found in the endoplasmic reticulum membrane. The protein is Probable methyltransferase PMT22 of Arabidopsis thaliana (Mouse-ear cress).